The following is a 308-amino-acid chain: Glutaminase (308 aa).

The substrate site is built by S66, N117, E161, N168, Y192, Y244, and V262.

The protein belongs to the glutaminase family. Homotetramer.

It carries out the reaction L-glutamine + H2O = L-glutamate + NH4(+). The sequence is that of Glutaminase from Salmonella choleraesuis (strain SC-B67).